The sequence spans 476 residues: Homeobox protein invected (476 aa).

3 disordered regions span residues 1-43 (MAAV…SEDI), 273-331 (KTRY…TSGD), and 347-381 (DRPSSGRSPRTRRPKKPPGDTASNDEKRPRTAFSG). Residues 23 to 32 (SPNTRDTTSP) show a composition bias toward polar residues. 2 stretches are compositionally biased toward basic and acidic residues: residues 33–43 (ECHDDEKSEDI) and 292–305 (KLDEARVPDIKTPD). Residues 318–331 (GSNSGSTSGATSGD) show a composition bias toward low complexity. A DNA-binding region (homeobox) is located at residues 372–431 (EKRPRTAFSGPQLARLKHEFAENRYLTERRRQSLAAELGLAEAQIKIWFQNKRAKIKKAS).

Belongs to the engrailed homeobox family. As to expression, expressed in the middle silk gland but not in the posterior silk gland during the fourth molt/fifth intermolt period.

Its subcellular location is the nucleus. In terms of biological role, this protein might be involved in the compartmentalization of the silk gland. This is Homeobox protein invected (INV) from Bombyx mori (Silk moth).